Consider the following 133-residue polypeptide: Phosphoribosyl-ATP pyrophosphatase (133 aa).

The interval 1–22 is disordered; the sequence is MGKPATKPAPKPSKQQDDKKSD.

Belongs to the PRA-PH family.

The protein resides in the cytoplasm. The enzyme catalyses 1-(5-phospho-beta-D-ribosyl)-ATP + H2O = 1-(5-phospho-beta-D-ribosyl)-5'-AMP + diphosphate + H(+). It participates in amino-acid biosynthesis; L-histidine biosynthesis; L-histidine from 5-phospho-alpha-D-ribose 1-diphosphate: step 2/9. In Gluconobacter oxydans (strain 621H) (Gluconobacter suboxydans), this protein is Phosphoribosyl-ATP pyrophosphatase.